Consider the following 183-residue polypeptide: MAEENAQEKQAPPSAGEQSEPLVTLERGPVSQFLADNGFEHQYLGRDAAGVELLEVERDFLLPLCTALYAYGFNYLECQCGYDLGAGQPLVSLYHLIKLSDGADRPQEVRLQVKLPRQDPRLPSVYWIWKSADWQERETYDMYGIVFEGHPNLKRILMPEDWIGWPLRKDYITPDFYELQDAY.

The disordered stretch occupies residues 1 to 21 (MAEENAQEKQAPPSAGEQSEP).

This sequence belongs to the complex I 30 kDa subunit family. As to quaternary structure, NDH-1 can be composed of about 15 different subunits; different subcomplexes with different compositions have been identified which probably have different functions.

It localises to the cellular thylakoid membrane. The catalysed reaction is a plastoquinone + NADH + (n+1) H(+)(in) = a plastoquinol + NAD(+) + n H(+)(out). It carries out the reaction a plastoquinone + NADPH + (n+1) H(+)(in) = a plastoquinol + NADP(+) + n H(+)(out). Its function is as follows. NDH-1 shuttles electrons from an unknown electron donor, via FMN and iron-sulfur (Fe-S) centers, to quinones in the respiratory and/or the photosynthetic chain. The immediate electron acceptor for the enzyme in this species is believed to be plastoquinone. Couples the redox reaction to proton translocation, and thus conserves the redox energy in a proton gradient. Cyanobacterial NDH-1 also plays a role in inorganic carbon-concentration. This is NAD(P)H-quinone oxidoreductase subunit J from Synechococcus sp. (strain JA-2-3B'a(2-13)) (Cyanobacteria bacterium Yellowstone B-Prime).